A 76-amino-acid chain; its full sequence is Omega-conotoxin-like TeAr94 (76 aa).

The signal sequence occupies residues 1-22 (MKLTCMMIVAVLFLTAWTFVTA). Residues 23–50 (VPHSSNALENLYLKAHHEMNNPEDSELN) constitute a propeptide that is removed on maturation. 3 disulfide bridges follow: C53–C67, C60–C71, and C66–C75.

It belongs to the conotoxin O1 superfamily. As to expression, expressed by the venom duct.

It localises to the secreted. Omega-conotoxins act at presynaptic membranes, they bind and block voltage-gated calcium channels. The protein is Omega-conotoxin-like TeAr94 of Conus textile (Cloth-of-gold cone).